The following is a 613-amino-acid chain: Autophagy-related protein 22-2 (613 aa).

Positions 1 to 28 are disordered; it reads MVLNSTPPASPGAEAQQRPPRYPGEDTA. The chain crosses the membrane as a helical span at residues 41–61; that stretch reads YGIAAEVFAVCGVGSFLPLTL. Positions 80 to 96 are enriched in polar residues; the sequence is GSSSPSTAPGNGTTTAT. The interval 80 to 99 is disordered; it reads GSSSPSTAPGNGTTTATLRR. N90 is a glycosylation site (N-linked (GlcNAc...) asparagine). The next 3 helical transmembrane spans lie at 120-140, 155-177, and 189-209; these read SFAM…LISF, LAFG…PVYI, and CLGS…ANDP. Residues 216-257 are disordered; that stretch reads KEEGEELSPVNSSGEFARSEDLDEENVRDSDDHFTTGHGLKT. N226 is a glycosylation site (N-linked (GlcNAc...) asparagine). Basic and acidic residues predominate over residues 232–250; the sequence is ARSEDLDEENVRDSDDHFT. Transmembrane regions (helical) follow at residues 278–298, 307–327, 382–402, and 418–438; these read VGLG…MLFA, ISGT…WFSF, VIVF…VSGT, and VGLL…LWPV. The N-linked (GlcNAc...) asparagine glycan is linked to N448. The next 4 membrane-spanning stretches (helical) occupy residues 453-473, 488-510, 522-544, and 553-573; these read LCIA…IPLF, FPLG…SFFG, YALY…GMLI, and GFFF…MVNA. The disordered stretch occupies residues 592–613; that stretch reads GEHASEYGGPSEEAEGLLARDI.

Belongs to the ATG22 family.

Its subcellular location is the vacuole membrane. Vacuolar effluxer which mediate the efflux of amino acids resulting from autophagic degradation. The release of autophagic amino acids allows the maintenance of protein synthesis and viability during nitrogen starvation. This is Autophagy-related protein 22-2 (atg22-2) from Neosartorya fischeri (strain ATCC 1020 / DSM 3700 / CBS 544.65 / FGSC A1164 / JCM 1740 / NRRL 181 / WB 181) (Aspergillus fischerianus).